The sequence spans 236 residues: uncharacterized protein (236 aa).

7 consecutive transmembrane segments (helical) span residues 32–52, 61–81, 90–110, 115–135, 144–164, 167–187, and 208–228; these read MALA…VEPI, FGTI…MGFG, ILFW…ALIY, IART…YGYS, GSFF…NLFL, SSLS…LIAW, and LSIM…LYLM.

The protein belongs to the BI1 family.

It localises to the cell membrane. This is an uncharacterized protein from Rickettsia prowazekii (strain Madrid E).